The sequence spans 86 residues: Small ribosomal subunit protein bS18c (86 aa).

It belongs to the bacterial ribosomal protein bS18 family. In terms of assembly, part of the 30S ribosomal subunit.

It localises to the plastid. The protein resides in the chloroplast. This Larix laricina (Tamarack) protein is Small ribosomal subunit protein bS18c.